A 159-amino-acid chain; its full sequence is Mesogenin-1 (159 aa).

Residues proline 79–serine 101 form a disordered region. Basic residues predominate over residues lysine 86 to alanine 100. One can recognise a bHLH domain in the interval glutamine 95–leucine 149.

Its subcellular location is the nucleus. In terms of biological role, involved in specifying the paraxial, but not dorsal, mesoderm. May regulate the expression of T-box transcription factors required for mesoderm formation and differentiation. In Gallus gallus (Chicken), this protein is Mesogenin-1 (MSGN1).